Consider the following 168-residue polypeptide: Protein FAM163A (168 aa).

Residues 6–26 (VVITGGILATVILLCIIAVLC) form a helical membrane-spanning segment.

This sequence belongs to the FAM163 family.

The protein resides in the membrane. The sequence is that of Protein FAM163A (Fam163a) from Mus musculus (Mouse).